The following is a 729-amino-acid chain: MAPPAKRAKRGWVPPGYKYLGPGNSLDQGEPTNPSDAAAKEHDEAYDQYIKSGKNPYLYFSAADQRFIDQTKDAKDWGGKVGHYFFRTKRAFAPKLATDSEPGTSGVSRAGKRTRPPAYIFINQARAKKKLTSSAAQQSSQTMSDGTSQPDGGNAVHSAARVERAADGPGGSGGGGSGGGGVGVSTGSYDNQTHYRFLGDGWVEITALATRLVHLNMPKSENYCRIRVHNTTDTSVKGNMAKDDAHEQIWTPWSLVDANAWGVWLQPSDWQYICNTMSQLNLVSLDQEIFNVVLKTVTEQDSGGQAIKIYNNDLTACMMVAVDSNNILPYTPAANSMETLGFYPWKPTIASPYRYYFCVDRDLSVTYENQEGTIEHNVMGTPKGMNSQFFTIENTQQITLLRTGDEFATGTYYFDTNPVKLTHTWQTNRQLGQPPLLSTFPEADTDAGTLTAQGSRHGATQMEVNWVSEAIRTRPAQVGFCQPHNDFEASRAGPFAAPKVPADVTQGVDREANGSVRYSYGKQHGENWAAHGPAPERYTWDETNFGSGRDTRDGFIQSAPLVVPPPLNGILTNANPIGTKNDIHFSNVFNSYGPLTAFSHPSPVYPQGQIWDKELDLEHKPRLHITAPFVCKNNAPGQMLVRLGPNLTDQYDPNGATLSRIVTYGTFFWKGKLTMRAKLRANTTWNPVYQVSVEDNGNSYMSVTKWLPTATGNMQSVPLITRPVARNTY.

Basic residues predominate over residues 1–10; that stretch reads MAPPAKRAKR. Disordered stretches follow at residues 1–39, 96–115, and 130–185; these read MAPP…DAAA, LATD…KRTR, and KLTS…VGVS. Positions 4 to 13 match the Nuclear localization signal motif; the sequence is PAKRAKRGWV. Residues 19 to 64 are phospholipase A2-like; that stretch reads YLGPGNSLDQGEPTNPSDAAAKEHDEAYDQYIKSGKNPYLYFSAAD. The span at 25 to 35 shows a compositional bias: polar residues; it reads SLDQGEPTNPS. The span at 132–142 shows a compositional bias: low complexity; sequence TSSAAQQSSQT. The segment covering 168–184 has biased composition (gly residues); the sequence is GPGGSGGGGSGGGGVGV. Residue asparagine 325 coordinates Mg(2+).

The protein belongs to the parvoviridae capsid protein family.

Its subcellular location is the virion. The protein localises to the host nucleus. Its function is as follows. Capsid protein self-assembles to form an icosahedral capsid with a T=1 symmetry, about 22 nm in diameter, and consisting of 60 copies of two size variants of the capsid proteins, VP1 and VP2, which differ by the presence of an N-terminal extension in the minor protein VP1. The capsid encapsulates the genomic ssDNA. Capsid proteins are responsible for the attachment to host cell receptors. This attachment induces virion internalization predominantly through clathrin-dependent endocytosis. Binding to the host receptors also induces capsid rearrangements leading to surface exposure of VP1 N-terminus, specifically its phospholipase A2-like region and putative nuclear localization signal(s). VP1 N-terminus might serve as a lipolytic enzyme to breach the endosomal membrane during entry into host cell and might contribute to virus transport to the nucleus. The protein is Capsid protein VP1 of Mus musculus (Mouse).